Here is a 227-residue protein sequence, read N- to C-terminus: PKHD-type hydroxylase ABSDF3031 (227 aa).

The region spanning 78–178 (KIIPPLFNRY…RFASFFWVQS (101 aa)) is the Fe2OG dioxygenase domain. Fe cation contacts are provided by His96, Asp98, and His159. Arg169 is a 2-oxoglutarate binding site.

Fe(2+) is required as a cofactor. Requires L-ascorbate as cofactor.

This is PKHD-type hydroxylase ABSDF3031 from Acinetobacter baumannii (strain SDF).